The sequence spans 1193 residues: Magnesium-chelatase subunit H (1193 aa).

Belongs to the Mg-chelatase subunit H family.

The enzyme catalyses protoporphyrin IX + Mg(2+) + ATP + H2O = Mg-protoporphyrin IX + ADP + phosphate + 3 H(+). It functions in the pathway porphyrin-containing compound metabolism; bacteriochlorophyll biosynthesis (light-independent). Its function is as follows. Involved in bacteriochlorophyll pigment biosynthesis; introduces a magnesium ion into protoporphyrin IX to yield Mg-protoroporphyrin IX. The chain is Magnesium-chelatase subunit H (bchH) from Cereibacter sphaeroides (strain ATCC 17023 / DSM 158 / JCM 6121 / CCUG 31486 / LMG 2827 / NBRC 12203 / NCIMB 8253 / ATH 2.4.1.) (Rhodobacter sphaeroides).